The chain runs to 81 residues: EC protein I/II (81 aa).

The protein belongs to the metallothionein superfamily. Type 15 family.

In terms of biological role, binds 5 molecules of zinc. May have a role in Zn(2+) homeostasis during embryogenesis. The chain is EC protein I/II from Triticum aestivum (Wheat).